Here is a 430-residue protein sequence, read N- to C-terminus: Elongation factor 1-gamma (430 aa).

The 83-residue stretch at 2 to 84 folds into the GST N-terminal domain; it reads VAGKLYTYPE…YVANETLRGS (83 aa). In terms of domain architecture, GST C-terminal spans 85–213; sequence SDLEKAQIIQ…FKLCEKAGEF (129 aa). Basic and acidic residues-rich tracts occupy residues 232–255 and 269–278; these read KTEK…KEQE and PKSKDPFDEM. Residues 232–278 are disordered; sequence KTEKAPKAVKAKPEKKEVPKKEQEEPADAAEEALAAEPKSKDPFDEM. An EF-1-gamma C-terminal domain is found at 271-430; that stretch reads SKDPFDEMPK…RKFNQGKIFK (160 aa).

As to quaternary structure, EF-1 is composed of four subunits: alpha, beta, delta, and gamma.

Functionally, probably plays a role in anchoring the complex to other cellular components. The polypeptide is Elongation factor 1-gamma (Artemia salina (Brine shrimp)).